The chain runs to 106 residues: NADH-quinone oxidoreductase subunit K (106 aa).

3 consecutive transmembrane segments (helical) span residues 8–28 (IGIENYIFLSVVLFCIGVFGV), 35–55 (IIVFMSIEIMLNAVNLLFVAF), and 66–86 (VFVFFSMAVAAAEVAVGLAIL).

The protein belongs to the complex I subunit 4L family. NDH-1 is composed of 14 different subunits. Subunits NuoA, H, J, K, L, M, N constitute the membrane sector of the complex.

The protein resides in the cell inner membrane. The enzyme catalyses a quinone + NADH + 5 H(+)(in) = a quinol + NAD(+) + 4 H(+)(out). Its function is as follows. NDH-1 shuttles electrons from NADH, via FMN and iron-sulfur (Fe-S) centers, to quinones in the respiratory chain. The immediate electron acceptor for the enzyme in this species is believed to be a menaquinone. Couples the redox reaction to proton translocation (for every two electrons transferred, four hydrogen ions are translocated across the cytoplasmic membrane), and thus conserves the redox energy in a proton gradient. This is NADH-quinone oxidoreductase subunit K from Flavobacterium johnsoniae (strain ATCC 17061 / DSM 2064 / JCM 8514 / BCRC 14874 / CCUG 350202 / NBRC 14942 / NCIMB 11054 / UW101) (Cytophaga johnsonae).